The chain runs to 173 residues: MPRSQNKDNFLDKAFTKMAEGIVKVMPIDSKEKEAYLYYRKGLAAQNDGDYSEALEYYEESLKLEDNQVDRGETLKNMAIIYMSNGDEERAINTYKKALGQNPKQPSCLKNMGLIYEKRGRMAQRNGNQDECDIWFDQAAEVWSKAVRLYPGGYLDIENWLKTTGRGNVDVYL.

3 TPR repeats span residues 35–68 (AYLYYRKGLAAQNDGDYSEALEYYEESLKLEDNQ), 72–105 (GETLKNMAIIYMSNGDEERAINTYKKALGQNPKQ), and 120–153 (GRMAQRNGNQDECDIWFDQAAEVWSKAVRLYPGG).

It belongs to the Ycf3 family.

Its subcellular location is the cellular thylakoid membrane. Functionally, essential for the assembly of the photosystem I (PSI) complex. May act as a chaperone-like factor to guide the assembly of the PSI subunits. This is Photosystem I assembly protein Ycf3 from Prochlorococcus marinus (strain NATL2A).